A 64-amino-acid polypeptide reads, in one-letter code: DNA-binding protein 7b (64 aa).

Residues lysine 5 and lysine 7 each carry the N6-methyllysine modification.

This sequence belongs to the 7 kDa DNA-binding/endoribonuclease P2 family. In terms of assembly, monomer. In terms of processing, lys-5 and Lys-7 may be methylated.

Its subcellular location is the cytoplasm. In terms of biological role, can constrain negative DNA supercoils. May be involved in maintaining the integrity of the genome at high temperature. This Saccharolobus shibatae (strain ATCC 51178 / DSM 5389 / JCM 8931 / NBRC 15437 / B12) (Sulfolobus shibatae) protein is DNA-binding protein 7b.